The following is a 510-amino-acid chain: Probable ADP-ribosylation factor-binding protein C1F3.05 (510 aa).

The VHS domain maps to 14–150 (ATDQFNLEPN…LMAFRGYKFP (137 aa)). The GAT domain occupies 177-301 (LEAHKAKLQE…VIEECSNSDL (125 aa)). The GAE domain occupies 391-510 (TNSSLTSILQ…VEQGESHLPL (120 aa)).

The protein resides in the golgi apparatus. It localises to the trans-Golgi network. Functionally, may play a role in the regulation of membrane traffic through the trans-Golgi network. The sequence is that of Probable ADP-ribosylation factor-binding protein C1F3.05 from Schizosaccharomyces pombe (strain 972 / ATCC 24843) (Fission yeast).